Reading from the N-terminus, the 132-residue chain is Phosphoribosyl-ATP pyrophosphatase (132 aa).

This sequence belongs to the PRA-PH family.

The protein localises to the cytoplasm. The catalysed reaction is 1-(5-phospho-beta-D-ribosyl)-ATP + H2O = 1-(5-phospho-beta-D-ribosyl)-5'-AMP + diphosphate + H(+). It functions in the pathway amino-acid biosynthesis; L-histidine biosynthesis; L-histidine from 5-phospho-alpha-D-ribose 1-diphosphate: step 2/9. This is Phosphoribosyl-ATP pyrophosphatase from Acidovorax sp. (strain JS42).